Here is a 156-residue protein sequence, read N- to C-terminus: Protein FAM162A (156 aa).

The interval 37-57 is disordered; that stretch reads TNGFCSKPQESPKPPDQHTYS. Residues 78-104 form a required for proapoptotic activity region; it reads RFKKEDEIPETVSFEMLDAAKNKVRVK. A helical membrane pass occupies residues 105 to 122; sequence ISYVMIALTVAGCVLMVI.

The protein belongs to the UPF0389 family. In terms of assembly, interacts with HSP90AB1; HSP90AB1 is essential for FAM162A mitochondrial localization and pro-apoptotic activity. Interacts with VDAC2; the interaction is probably involved in inducing mitochondrial permeability transition.

It localises to the mitochondrion membrane. Proposed to be involved in regulation of apoptosis; the exact mechanism may differ between cell types/tissues. May be involved in hypoxia-induced cell death of transformed cells implicating cytochrome C release and caspase activation (such as CASP9) and inducing mitochondrial permeability transition. May be involved in hypoxia-induced cell death of neuronal cells probably by promoting release of AIFM1 from mitochondria to cytoplasm and its translocation to the nucleus; however, the involvement of caspases has been reported conflictingly. The protein is Protein FAM162A (FAM162A) of Bos taurus (Bovine).